We begin with the raw amino-acid sequence, 426 residues long: Phosphomethylpyrimidine synthase (426 aa).

Residues asparagine 65, methionine 94, tyrosine 123, histidine 162, 184 to 186 (SRG), 225 to 228 (DGMR), and glutamate 264 each bind substrate. Residue histidine 268 participates in Zn(2+) binding. Position 291 (tyrosine 291) interacts with substrate. Histidine 332 serves as a coordination point for Zn(2+). Residues cysteine 408, cysteine 411, and cysteine 415 each contribute to the [4Fe-4S] cluster site.

The protein belongs to the ThiC family. It depends on [4Fe-4S] cluster as a cofactor.

The catalysed reaction is 5-amino-1-(5-phospho-beta-D-ribosyl)imidazole + S-adenosyl-L-methionine = 4-amino-2-methyl-5-(phosphooxymethyl)pyrimidine + CO + 5'-deoxyadenosine + formate + L-methionine + 3 H(+). It functions in the pathway cofactor biosynthesis; thiamine diphosphate biosynthesis. In terms of biological role, catalyzes the synthesis of the hydroxymethylpyrimidine phosphate (HMP-P) moiety of thiamine from aminoimidazole ribotide (AIR) in a radical S-adenosyl-L-methionine (SAM)-dependent reaction. The protein is Phosphomethylpyrimidine synthase of Methanococcus aeolicus (strain ATCC BAA-1280 / DSM 17508 / OCM 812 / Nankai-3).